A 284-amino-acid chain; its full sequence is Pantothenate synthetase (284 aa).

30–37 (MGNLHDGH) is an ATP binding site. Histidine 37 (proton donor) is an active-site residue. Glutamine 61 contacts (R)-pantoate. Position 61 (glutamine 61) interacts with beta-alanine. An ATP-binding site is contributed by 149–152 (GEKD). Glutamine 155 is a (R)-pantoate binding site. ATP is bound by residues isoleucine 178 and 186–189 (LSSR).

Belongs to the pantothenate synthetase family. Homodimer.

The protein localises to the cytoplasm. It catalyses the reaction (R)-pantoate + beta-alanine + ATP = (R)-pantothenate + AMP + diphosphate + H(+). Its pathway is cofactor biosynthesis; (R)-pantothenate biosynthesis; (R)-pantothenate from (R)-pantoate and beta-alanine: step 1/1. In terms of biological role, catalyzes the condensation of pantoate with beta-alanine in an ATP-dependent reaction via a pantoyl-adenylate intermediate. This chain is Pantothenate synthetase, found in Salmonella choleraesuis (strain SC-B67).